Here is a 267-residue protein sequence, read N- to C-terminus: 3-deoxy-manno-octulosonate cytidylyltransferase 2 (267 aa).

It belongs to the KdsB family.

It is found in the cytoplasm. It catalyses the reaction 3-deoxy-alpha-D-manno-oct-2-ulosonate + CTP = CMP-3-deoxy-beta-D-manno-octulosonate + diphosphate. The protein operates within nucleotide-sugar biosynthesis; CMP-3-deoxy-D-manno-octulosonate biosynthesis; CMP-3-deoxy-D-manno-octulosonate from 3-deoxy-D-manno-octulosonate and CTP: step 1/1. It participates in bacterial outer membrane biogenesis; lipopolysaccharide biosynthesis. Its function is as follows. Activates KDO (a required 8-carbon sugar) for incorporation into bacterial lipopolysaccharide in Gram-negative bacteria. This is 3-deoxy-manno-octulosonate cytidylyltransferase 2 from Burkholderia ambifaria (strain MC40-6).